We begin with the raw amino-acid sequence, 440 residues long: Chromosomal replication initiator protein DnaA (440 aa).

The segment at methionine 1 to asparagine 74 is domain I, interacts with DnaA modulators. The tract at residues asparagine 74–threonine 99 is domain II. Residues isoleucine 100–alanine 316 form a domain III, AAA+ region region. ATP is bound by residues glycine 146, glycine 148, lysine 149, and threonine 150. A domain IV, binds dsDNA region spans residues threonine 317–serine 440.

The protein belongs to the DnaA family. Oligomerizes as a right-handed, spiral filament on DNA at oriC.

It is found in the cytoplasm. Plays an essential role in the initiation and regulation of chromosomal replication. ATP-DnaA binds to the origin of replication (oriC) to initiate formation of the DNA replication initiation complex once per cell cycle. Binds the DnaA box (a 9 base pair repeat at the origin) and separates the double-stranded (ds)DNA. Forms a right-handed helical filament on oriC DNA; dsDNA binds to the exterior of the filament while single-stranded (ss)DNA is stabiized in the filament's interior. The ATP-DnaA-oriC complex binds and stabilizes one strand of the AT-rich DNA unwinding element (DUE), permitting loading of DNA polymerase. After initiation quickly degrades to an ADP-DnaA complex that is not apt for DNA replication. Binds acidic phospholipids. In Campylobacter jejuni subsp. doylei (strain ATCC BAA-1458 / RM4099 / 269.97), this protein is Chromosomal replication initiator protein DnaA.